We begin with the raw amino-acid sequence, 467 residues long: Putative ankyrin repeat protein R911 (467 aa).

ANK repeat units lie at residues 38 to 70 (IKTDIIEYVMENDLIDILKYLSLLKKLGHPIIV), 79 to 108 (TLNKYLIKNCGENQLEIVKFLVSLGADIRA), 109 to 138 (GNDYAVGLSSQNGHLEVVKYLVNQGSDIRA), 140 to 168 (NDYAVRWASGNGHLEVVKYLVSQGANIRA), 170 to 198 (NDHAIGLASYYGYLEVVKYLVSQGADIRS), 199 to 228 (DNDYAVRMASRNGHIEVVEYLVSQGANIRS), 229 to 258 (DNDYAVRLASQNGHLEVVKYLVSQGADIKS), 260 to 288 (NDYAVRLASQNGHLEVVEYLVTQGTNIRV), 289 to 318 (NNNYAVEWASKNGNLEVVKYLISQGADIIA), 320 to 348 (NNFAVRWASRNGHLEVVKYLVSLGADIKS), 350 to 378 (NDYAVRWASGNGHLEVVKYLVSQGSDIRV), 379 to 408 (ENDYAVRWASRNGHFDVIKYLVSQGADIRS), 410 to 438 (NDYAVKWASENGHLEVVKFLVSLGADIKA), and 440 to 467 (DDYAVRWASEKGHLEVVEYLVSQGAVLS).

The protein is Putative ankyrin repeat protein R911 of Acanthamoeba polyphaga mimivirus (APMV).